A 123-amino-acid chain; its full sequence is Large ribosomal subunit protein bL12 (123 aa).

Belongs to the bacterial ribosomal protein bL12 family. As to quaternary structure, homodimer. Part of the ribosomal stalk of the 50S ribosomal subunit. Forms a multimeric L10(L12)X complex, where L10 forms an elongated spine to which 2 to 4 L12 dimers bind in a sequential fashion. Binds GTP-bound translation factors.

Functionally, forms part of the ribosomal stalk which helps the ribosome interact with GTP-bound translation factors. Is thus essential for accurate translation. This chain is Large ribosomal subunit protein bL12, found in Bartonella henselae (strain ATCC 49882 / DSM 28221 / CCUG 30454 / Houston 1) (Rochalimaea henselae).